Reading from the N-terminus, the 287-residue chain is Nucleotide-binding protein Ppro_0977 (287 aa).

G8–S15 serves as a coordination point for ATP. Residue D59–G62 participates in GTP binding.

This sequence belongs to the RapZ-like family.

In terms of biological role, displays ATPase and GTPase activities. This is Nucleotide-binding protein Ppro_0977 from Pelobacter propionicus (strain DSM 2379 / NBRC 103807 / OttBd1).